The primary structure comprises 59 residues: UPF0509 protein KPN78578_12530 (59 aa).

The protein belongs to the UPF0509 family.

The chain is UPF0509 protein KPN78578_12530 from Klebsiella pneumoniae subsp. pneumoniae (strain ATCC 700721 / MGH 78578).